The sequence spans 238 residues: Uridylate kinase (238 aa).

Residue 12 to 15 (KLSG) coordinates ATP. A UMP-binding site is contributed by G54. ATP-binding residues include G55 and R59. UMP contacts are provided by residues D74 and 135–142 (VGAPYFTT). Residues T162, Y168, and D171 each coordinate ATP.

It belongs to the UMP kinase family. Homohexamer.

It is found in the cytoplasm. The enzyme catalyses UMP + ATP = UDP + ADP. It participates in pyrimidine metabolism; CTP biosynthesis via de novo pathway; UDP from UMP (UMPK route): step 1/1. Its activity is regulated as follows. Inhibited by UTP. Its function is as follows. Catalyzes the reversible phosphorylation of UMP to UDP. The protein is Uridylate kinase of Erythrobacter litoralis (strain HTCC2594).